The following is a 176-amino-acid chain: Ribosome maturation factor RimM (176 aa).

Residues 100–173 (PGEFHLLDLL…WLMVCPPPGL (74 aa)) enclose the PRC barrel domain.

This sequence belongs to the RimM family. Binds ribosomal protein uS19.

It localises to the cytoplasm. Its function is as follows. An accessory protein needed during the final step in the assembly of 30S ribosomal subunit, possibly for assembly of the head region. Essential for efficient processing of 16S rRNA. May be needed both before and after RbfA during the maturation of 16S rRNA. It has affinity for free ribosomal 30S subunits but not for 70S ribosomes. The sequence is that of Ribosome maturation factor RimM from Prochlorococcus marinus (strain SARG / CCMP1375 / SS120).